Reading from the N-terminus, the 331-residue chain is Phenylalanine--tRNA ligase alpha subunit (331 aa).

Glu252 provides a ligand contact to Mg(2+).

This sequence belongs to the class-II aminoacyl-tRNA synthetase family. Phe-tRNA synthetase alpha subunit type 1 subfamily. Tetramer of two alpha and two beta subunits. It depends on Mg(2+) as a cofactor.

Its subcellular location is the cytoplasm. The catalysed reaction is tRNA(Phe) + L-phenylalanine + ATP = L-phenylalanyl-tRNA(Phe) + AMP + diphosphate + H(+). In Hahella chejuensis (strain KCTC 2396), this protein is Phenylalanine--tRNA ligase alpha subunit.